We begin with the raw amino-acid sequence, 328 residues long: D-cysteine desulfhydrase (328 aa).

The residue at position 51 (K51) is an N6-(pyridoxal phosphate)lysine.

It belongs to the ACC deaminase/D-cysteine desulfhydrase family. In terms of assembly, homodimer. Pyridoxal 5'-phosphate is required as a cofactor.

The enzyme catalyses D-cysteine + H2O = hydrogen sulfide + pyruvate + NH4(+) + H(+). Catalyzes the alpha,beta-elimination reaction of D-cysteine and of several D-cysteine derivatives. It could be a defense mechanism against D-cysteine. The protein is D-cysteine desulfhydrase of Escherichia fergusonii (strain ATCC 35469 / DSM 13698 / CCUG 18766 / IAM 14443 / JCM 21226 / LMG 7866 / NBRC 102419 / NCTC 12128 / CDC 0568-73).